The sequence spans 490 residues: Aspartyl/glutamyl-tRNA(Asn/Gln) amidotransferase subunit B (490 aa).

Belongs to the GatB/GatE family. GatB subfamily. In terms of assembly, heterotrimer of A, B and C subunits.

The catalysed reaction is L-glutamyl-tRNA(Gln) + L-glutamine + ATP + H2O = L-glutaminyl-tRNA(Gln) + L-glutamate + ADP + phosphate + H(+). It carries out the reaction L-aspartyl-tRNA(Asn) + L-glutamine + ATP + H2O = L-asparaginyl-tRNA(Asn) + L-glutamate + ADP + phosphate + 2 H(+). In terms of biological role, allows the formation of correctly charged Asn-tRNA(Asn) or Gln-tRNA(Gln) through the transamidation of misacylated Asp-tRNA(Asn) or Glu-tRNA(Gln) in organisms which lack either or both of asparaginyl-tRNA or glutaminyl-tRNA synthetases. The reaction takes place in the presence of glutamine and ATP through an activated phospho-Asp-tRNA(Asn) or phospho-Glu-tRNA(Gln). The polypeptide is Aspartyl/glutamyl-tRNA(Asn/Gln) amidotransferase subunit B (Symbiobacterium thermophilum (strain DSM 24528 / JCM 14929 / IAM 14863 / T)).